The sequence spans 874 residues: Rho GTPase-activating protein 42 (874 aa).

The 256-residue stretch at 7-262 folds into the BAR domain; sequence EFSDSYLDSP…MKSANQDYRP (256 aa). Positions 225 to 261 form a coiled coil; that stretch reads KQQLQFNLQNTRNNFESTRQEVERLMQRMKSANQDYR. The region spanning 265–374 is the PH domain; the sequence is QWTMEGYLYV…WLEAMDGKEP (110 aa). Phosphotyrosine is present on Tyr-376. Positions 376–572 constitute a Rho-GAP domain; it reads YTLPAIISKK…ILIEHYEKIF (197 aa). The tract at residues 575–720 is disordered; it reads APDPSIPLPQ…GDVSPPIDLV (146 aa). The span at 620-650 shows a compositional bias: low complexity; the sequence is DSYSSSPDSTPMGSIESLSSHSSEQNSTTKS. Residues 667 to 686 are compositionally biased toward polar residues; sequence TPSSSNGQKSLGLWTTSPES. Ser-683 carries the post-translational modification Phosphoserine. Over residues 687-697 the composition is skewed to basic and acidic residues; that stretch reads SSREDATKTDA. Over residues 700–711 the composition is skewed to polar residues; that stretch reads DCQSVASVTSPG. Ser-740, Ser-753, Ser-756, and Ser-811 each carry phosphoserine. Positions 749 to 762 are enriched in polar residues; sequence SYSGSIQSLTSVGS. Residues 749–777 are disordered; it reads SYSGSIQSLTSVGSKETPKASPNPDLPPK. Positions 816-874 constitute an SH3 domain; that stretch reads SSGRQAKAMYSCKAEHSHELSFPQGAIFSNVYPSVEPGWLKATYEGKTGLVPENYVVFL. Tyr-870 carries the post-translational modification Phosphotyrosine.

As to expression, highly and selectively expressed in smooth muscle cells.

Its function is as follows. May influence blood pressure by functioning as a GTPase-activating protein for RHOA in vascular smooth muscle. This chain is Rho GTPase-activating protein 42, found in Homo sapiens (Human).